The following is a 212-amino-acid chain: Large ribosomal subunit protein uL3 (212 aa).

Glutamine 153 carries the post-translational modification N5-methylglutamine.

This sequence belongs to the universal ribosomal protein uL3 family. As to quaternary structure, part of the 50S ribosomal subunit. Forms a cluster with proteins L14 and L19. Post-translationally, methylated by PrmB.

One of the primary rRNA binding proteins, it binds directly near the 3'-end of the 23S rRNA, where it nucleates assembly of the 50S subunit. This is Large ribosomal subunit protein uL3 from Shewanella piezotolerans (strain WP3 / JCM 13877).